The sequence spans 265 residues: MDDLVREELPNGTRRLFARDAQGGEAGFAVIEPGRPGQPAMVEVQVRPEHRSCGLGGRLVRAALDEAGPGAYLWDHENSPASQAIVRRNGLVPVRTLCQMRRWLAYPPLPEPVFPDGVSVRQYQGPQDDEELLRVNNAAFDWHPEQGGWSIEKLRERLAQPWVDPAGIFLARDEQDRLIGFHWTRTHPQTQTEHKLGEVYVLGVDPACHCKGLGKALTLVGLRHLRDQGLAQAKLYVEQTNAPALATYRGLGFTVHAQDVAYVRG.

N-acetyltransferase domains lie at 1–110 and 118–265; these read MDDL…PPLP and VSVR…YVRG. Position 3 (D3) interacts with 1D-myo-inositol 2-(L-cysteinylamino)-2-deoxy-alpha-D-glucopyranoside. 44 to 46 is a binding site for acetyl-CoA; it reads VQV. 1D-myo-inositol 2-(L-cysteinylamino)-2-deoxy-alpha-D-glucopyranoside contacts are provided by E145, R185, and E198. Residues 202–204 and 209–215 each bind acetyl-CoA; these read LGV and HCKGLGK. Y236 serves as a coordination point for 1D-myo-inositol 2-(L-cysteinylamino)-2-deoxy-alpha-D-glucopyranoside.

This sequence belongs to the acetyltransferase family. MshD subfamily. Monomer.

The enzyme catalyses 1D-myo-inositol 2-(L-cysteinylamino)-2-deoxy-alpha-D-glucopyranoside + acetyl-CoA = mycothiol + CoA + H(+). In terms of biological role, catalyzes the transfer of acetyl from acetyl-CoA to desacetylmycothiol (Cys-GlcN-Ins) to form mycothiol. The polypeptide is Mycothiol acetyltransferase (Segniliparus rotundus (strain ATCC BAA-972 / CDC 1076 / CIP 108378 / DSM 44985 / JCM 13578)).